Reading from the N-terminus, the 143-residue chain is Transcriptional regulator MraZ (143 aa).

2 consecutive SpoVT-AbrB domains span residues 5 to 47 (EYNH…SMDE) and 76 to 119 (ATEC…SSDQ).

The protein belongs to the MraZ family. As to quaternary structure, forms oligomers.

It is found in the cytoplasm. The protein localises to the nucleoid. The sequence is that of Transcriptional regulator MraZ from Alkaliphilus metalliredigens (strain QYMF).